The chain runs to 374 residues: Putative 2,3-diketo-5-methylthiopentyl-1-phosphate enolase (374 aa).

Substrate-binding positions include lysine 138, 164–167 (QDDE), histidine 255, glycine 327, and 349–350 (GG). Aspartate 166 serves as a coordination point for Mg(2+).

The protein belongs to the RuBisCO large chain family. Type IV subfamily. As to quaternary structure, homodimer. It depends on Mg(2+) as a cofactor.

The enzyme catalyses 5-methylsulfanyl-2,3-dioxopentyl phosphate = 2-hydroxy-5-methylsulfanyl-3-oxopent-1-enyl phosphate. It participates in amino-acid biosynthesis; L-methionine biosynthesis via salvage pathway; L-methionine from S-methyl-5-thio-alpha-D-ribose 1-phosphate: step 3/6. Functionally, catalyzes the enolization of 2,3-diketo-5-methylthiopentyl-1-phosphate (DK-MTP-1-P) into 2-hydroxy-3-keto-5-methylthiopentenyl-1-phosphate (HK-MTPenyl-1-P). This chain is Putative 2,3-diketo-5-methylthiopentyl-1-phosphate enolase (mtnW), found in Shouchella clausii (strain KSM-K16) (Alkalihalobacillus clausii).